The sequence spans 364 residues: Spermidine/putrescine import ATP-binding protein PotA (364 aa).

The ABC transporter domain occupies 5–235; the sequence is LSLKSVSKSY…PVNRFVADFI (231 aa). 37–44 contributes to the ATP binding site; it reads GPSGCGKT.

The protein belongs to the ABC transporter superfamily. Spermidine/putrescine importer (TC 3.A.1.11.1) family. As to quaternary structure, the complex is composed of two ATP-binding proteins (PotA), two transmembrane proteins (PotB and PotC) and a solute-binding protein (PotD).

Its subcellular location is the cell membrane. It catalyses the reaction ATP + H2O + polyamine-[polyamine-binding protein]Side 1 = ADP + phosphate + polyamineSide 2 + [polyamine-binding protein]Side 1.. Functionally, part of the ABC transporter complex PotABCD involved in spermidine/putrescine import. Responsible for energy coupling to the transport system. This Staphylococcus aureus (strain USA300) protein is Spermidine/putrescine import ATP-binding protein PotA.